We begin with the raw amino-acid sequence, 453 residues long: Carbamoyl phosphate synthase arginine-specific small chain (453 aa).

Residues 1–28 (MFARVFKAMPARAPAFTSVNASIQSRFM) constitute a mitochondrion transit peptide. The Glutamine amidotransferase type-1 domain occupies 219 to 406 (HVAVIDCGVK…LDSVVKYKNH (188 aa)). Residue Cys-295 is the Nucleophile of the active site. Active-site residues include His-379 and Glu-381.

The protein belongs to the CarA family. In terms of assembly, heterodimer composed of 2 chains; the small (or glutamine) chain promotes the hydrolysis of glutamine to ammonia, which is used by the large (or ammonia) chain to synthesize carbamoyl phosphate.

The protein localises to the mitochondrion matrix. It catalyses the reaction hydrogencarbonate + L-glutamine + 2 ATP + H2O = carbamoyl phosphate + L-glutamate + 2 ADP + phosphate + 2 H(+). The enzyme catalyses L-glutamine + H2O = L-glutamate + NH4(+). The protein operates within amino-acid biosynthesis; L-arginine biosynthesis; carbamoyl phosphate from bicarbonate: step 1/1. Functionally, small subunit of the arginine-specific carbamoyl phosphate synthase (CPSase). CPSase catalyzes the formation of carbamoyl phosphate from the ammonia moiety of glutamine, carbonate, and phosphate donated by ATP, the first step of the arginine biosynthetic pathway. The small subunit (glutamine amidotransferase) binds and cleaves glutamine to supply the large subunit with the substrate ammonia. In Aspergillus niger (strain ATCC MYA-4892 / CBS 513.88 / FGSC A1513), this protein is Carbamoyl phosphate synthase arginine-specific small chain (cpa1).